Consider the following 235-residue polypeptide: RNA-free ribonuclease P (235 aa).

This sequence belongs to the HARP family.

The catalysed reaction is Endonucleolytic cleavage of RNA, removing 5'-extranucleotides from tRNA precursor.. In terms of biological role, RNA-free RNase P that catalyzes the removal of the 5'-leader sequence from pre-tRNA to produce the mature 5'-terminus. In Methanothrix thermoacetophila (strain DSM 6194 / JCM 14653 / NBRC 101360 / PT) (Methanosaeta thermophila), this protein is RNA-free ribonuclease P.